Consider the following 470-residue polypeptide: Light-independent protochlorophyllide reductase subunit N (470 aa).

[4Fe-4S] cluster-binding residues include cysteine 23, cysteine 48, and cysteine 108.

It belongs to the BchN/ChlN family. Protochlorophyllide reductase is composed of three subunits; ChlL, ChlN and ChlB. Forms a heterotetramer of two ChlB and two ChlN subunits. It depends on [4Fe-4S] cluster as a cofactor.

The protein resides in the plastid. The protein localises to the chloroplast. It carries out the reaction chlorophyllide a + oxidized 2[4Fe-4S]-[ferredoxin] + 2 ADP + 2 phosphate = protochlorophyllide a + reduced 2[4Fe-4S]-[ferredoxin] + 2 ATP + 2 H2O. It functions in the pathway porphyrin-containing compound metabolism; chlorophyll biosynthesis (light-independent). In terms of biological role, component of the dark-operative protochlorophyllide reductase (DPOR) that uses Mg-ATP and reduced ferredoxin to reduce ring D of protochlorophyllide (Pchlide) to form chlorophyllide a (Chlide). This reaction is light-independent. The NB-protein (ChlN-ChlB) is the catalytic component of the complex. This Zygnema circumcarinatum (Green alga) protein is Light-independent protochlorophyllide reductase subunit N.